Consider the following 419-residue polypeptide: Voltage-gated potassium channel subunit beta-1 (419 aa).

The tract at residues 1 to 52 (MLAARTGAAGSQISEENTKLRRQSGFSVAGKDKSPKKASENAKDSSLSPSGE) is disordered. Residues 30 to 43 (GKDKSPKKASENAK) are compositionally biased toward basic and acidic residues. NADP(+) contacts are provided by threonine 108, tryptophan 109, glutamine 115, and aspartate 137. The active-site Proton donor/acceptor is the tyrosine 142. Residues asparagine 210, serine 240, arginine 241, glutamine 266, tryptophan 295, serine 296, proline 297, leucine 298, alanine 299, cysteine 300, lysine 306, arginine 316, glycine 375, serine 377, glutamine 381, glutamate 384, and asparagine 385 each contribute to the NADP(+) site.

It belongs to the shaker potassium channel beta subunit family. Homotetramer. Interaction with tetrameric potassium channel alpha subunits gives rise to a heterooctamer. Identified in potassium channel complexes containing KCNA1, KCNA2, KCNA4, KCNA5, KCNA6, KCNAB1 and KCNAB2. Part of a complex containing KCNA1, KCNA4 and LGI1; interaction with LGI1 inhibits down-regulation of KCNA1 channel activity. Interacts with the dimer formed by GNB1 and GNG2; this enhances KCNA1 binding. Interacts with SQSTM1. As to expression, in brain, expression is most prominent in caudate nucleus, hippocampus and thalamus. Significant expression also detected in amygdala and subthalamic nucleus. Also expressed in both healthy and cardiomyopathic heart. Up to four times more abundant in left ventricle than left atrium.

Its subcellular location is the cytoplasm. It localises to the membrane. The protein resides in the cell membrane. The catalysed reaction is a primary alcohol + NADP(+) = an aldehyde + NADPH + H(+). It carries out the reaction a secondary alcohol + NADP(+) = a ketone + NADPH + H(+). In terms of biological role, regulatory subunit of the voltage-gated potassium (Kv) Shaker channels composed of pore-forming and potassium-conducting alpha subunits and of regulatory beta subunits. The beta-1/KCNAB1 cytoplasmic subunit mediates closure of delayed rectifier potassium channels by physically obstructing the pore via its N-terminal domain and increases the speed of channel closure for other family members. Promotes the inactivation of Kv1.1/KCNA1, Kv1.2/KCNA2, Kv1.4/KCNA4, Kv1.5/KCNA5 and Kv1.6/KCNA6 alpha subunit-containing channels. Displays nicotinamide adenine dinucleotide phosphate (NADPH)-dependent aldoketoreductase activity by catalyzing the NADPH-dependent reduction of a variety of endogenous aldehydes and ketones. The binding of NADPH is required for efficient down-regulation of potassium channel activity. Oxidation of the bound NADPH restrains N-terminal domain from blocking the channel, thereby decreasing N-type inactivation of potassium channel activity. Isoform KvB1.2 shows no effect on KCNA1, KCNA2 or KCNB1. The polypeptide is Voltage-gated potassium channel subunit beta-1 (Homo sapiens (Human)).